A 596-amino-acid chain; its full sequence is Delta(24(24(1)))-sterol reductase (596 aa).

Positions 1-122 (MSSRYSLRQT…GHATNGHATS (122 aa)) are disordered. Positions 98 to 112 (NGNGNGYTNGHGNGN) are enriched in gly residues. The next 8 membrane-spanning stretches (helical) occupy residues 168-188 (FGTAAMMTLFPVLMWYMWIGA), 225-245 (VWAWYWSYLIVEGAFYCLLPG), 269-289 (WSLYTTLACLAGLHYSGIWPL), 296-316 (FGPLLSVAILSGFLVSIVAYF), 353-373 (MFFEVRMPWYILLILSLGTAA), 381-401 (YVSGEVWFLVMAHFLYANACA), 419-439 (GFMLIFWNLAGVPLSYCHCTI), and 454-474 (GILAAMFVGYLFWYWVWDSCN). Residues Lys-477, Arg-481, Leu-516, and 528-529 (HY) each bind NADP(+). The helical transmembrane segment at 535-557 (FAVSWGLITGFESPFPWFYPVFF) threads the bilayer. Residues Asp-568, 572–576 (CRRKY), and Tyr-583 each bind NADP(+).

Belongs to the ERG4/ERG24 family.

The protein localises to the endoplasmic reticulum membrane. The enzyme catalyses ergosterol + NADP(+) = ergosta-5,7,22,24(28)-tetraen-3beta-ol + NADPH + H(+). It functions in the pathway steroid metabolism; ergosterol biosynthesis. Functionally, delta(24(24(1)))-sterol reductase; part of the third module of ergosterol biosynthesis pathway that includes the late steps of the pathway. ERG4 catalyzes the last step of ergosterol biosynthesis by converting ergosta-5,7,22,24(28)-tetraen-3beta-ol into ergosterol. The third module or late pathway involves the ergosterol synthesis itself through consecutive reactions that mainly occur in the endoplasmic reticulum (ER) membrane. Firstly, the squalene synthase ERG9 catalyzes the condensation of 2 farnesyl pyrophosphate moieties to form squalene, which is the precursor of all steroids. Squalene synthase is crucial for balancing the incorporation of farnesyl diphosphate (FPP) into sterol and nonsterol isoprene synthesis. Secondly, squalene is converted into lanosterol by the consecutive action of the squalene epoxidase ERG1 and the lanosterol synthase ERG7. Then, the delta(24)-sterol C-methyltransferase ERG6 methylates lanosterol at C-24 to produce eburicol. Eburicol is the substrate of the sterol 14-alpha demethylase encoded by CYP51A, CYP51B and CYP51C, to yield 4,4,24-trimethyl ergosta-8,14,24(28)-trienol. CYP51B encodes the enzyme primarily responsible for sterol 14-alpha-demethylation, and plays an essential role in ascospore formation. CYP51A encodes an additional sterol 14-alpha-demethylase, induced on ergosterol depletion and responsible for the intrinsic variation in azole sensitivity. The third CYP51 isoform, CYP51C, does not encode a sterol 14-alpha-demethylase, but is required for full virulence on host wheat ears. The C-14 reductase ERG24 then reduces the C14=C15 double bond which leads to 4,4-dimethylfecosterol. A sequence of further demethylations at C-4, involving the C-4 demethylation complex containing the C-4 methylsterol oxidases ERG25, the sterol-4-alpha-carboxylate 3-dehydrogenase ERG26 and the 3-keto-steroid reductase ERG27, leads to the production of fecosterol via 4-methylfecosterol. ERG28 has a role as a scaffold to help anchor ERG25, ERG26 and ERG27 to the endoplasmic reticulum. The C-8 sterol isomerase ERG2 then catalyzes the reaction which results in unsaturation at C-7 in the B ring of sterols and thus converts fecosterol to episterol. The sterol-C5-desaturases ERG3A and ERG3BB then catalyze the introduction of a C-5 double bond in the B ring to produce 5-dehydroepisterol. The C-22 sterol desaturases ERG5A and ERG5B further convert 5-dehydroepisterol into ergosta-5,7,22,24(28)-tetraen-3beta-ol by forming the C-22(23) double bond in the sterol side chain. Finally, ergosta-5,7,22,24(28)-tetraen-3beta-ol is substrate of the C-24(28) sterol reductase ERG4 to produce ergosterol. The polypeptide is Delta(24(24(1)))-sterol reductase (Gibberella zeae (strain ATCC MYA-4620 / CBS 123657 / FGSC 9075 / NRRL 31084 / PH-1) (Wheat head blight fungus)).